A 145-amino-acid chain; its full sequence is 3-hydroxyacyl-[acyl-carrier-protein] dehydratase FabZ (145 aa).

H51 is a catalytic residue.

Belongs to the thioester dehydratase family. FabZ subfamily.

The protein localises to the cytoplasm. It carries out the reaction a (3R)-hydroxyacyl-[ACP] = a (2E)-enoyl-[ACP] + H2O. Its function is as follows. Involved in unsaturated fatty acids biosynthesis. Catalyzes the dehydration of short chain beta-hydroxyacyl-ACPs and long chain saturated and unsaturated beta-hydroxyacyl-ACPs. The polypeptide is 3-hydroxyacyl-[acyl-carrier-protein] dehydratase FabZ (Staphylococcus haemolyticus (strain JCSC1435)).